We begin with the raw amino-acid sequence, 426 residues long: Serine--tRNA ligase (426 aa).

L-serine is bound at residue 233-235 (TAE). 264–266 (RSE) serves as a coordination point for ATP. E287 contributes to the L-serine binding site. 351–354 (EISS) provides a ligand contact to ATP. S387 serves as a coordination point for L-serine.

This sequence belongs to the class-II aminoacyl-tRNA synthetase family. Type-1 seryl-tRNA synthetase subfamily. In terms of assembly, homodimer. The tRNA molecule binds across the dimer.

Its subcellular location is the cytoplasm. The enzyme catalyses tRNA(Ser) + L-serine + ATP = L-seryl-tRNA(Ser) + AMP + diphosphate + H(+). The catalysed reaction is tRNA(Sec) + L-serine + ATP = L-seryl-tRNA(Sec) + AMP + diphosphate + H(+). The protein operates within aminoacyl-tRNA biosynthesis; selenocysteinyl-tRNA(Sec) biosynthesis; L-seryl-tRNA(Sec) from L-serine and tRNA(Sec): step 1/1. In terms of biological role, catalyzes the attachment of serine to tRNA(Ser). Is also able to aminoacylate tRNA(Sec) with serine, to form the misacylated tRNA L-seryl-tRNA(Sec), which will be further converted into selenocysteinyl-tRNA(Sec). The sequence is that of Serine--tRNA ligase from Clostridium botulinum (strain 657 / Type Ba4).